The chain runs to 282 residues: Ribonuclease P protein subunit p38 (282 aa).

Disordered stretches follow at residues 1-21 (MAAA…PLPV) and 61-103 (EDRK…QASG). The residue at position 2 (Ala-2) is an N-acetylalanine. Position 12 is a phosphoserine (Ser-12). The segment covering 88–97 (EDLKKEKPKG) has biased composition (basic and acidic residues). A phosphoserine mark is found at Ser-226 and Ser-235. Residues 262–282 (KLIPNPNKIRKPPKSKRTASK) are disordered. The segment covering 269–282 (KIRKPPKSKRTASK) has biased composition (basic residues).

The protein belongs to the eukaryotic ribosomal protein eL8 family. In terms of assembly, component of nuclear RNase P and RNase MRP ribonucleoproteins. RNase P consists of a catalytic RNA moiety and about 10 protein subunits; POP1, POP4, POP5, POP7, RPP14, RPP21, RPP25, RPP30, RPP38 and RPP40. Within the RNase P complex, POP1, POP7 and RPP25 form the 'finger' subcomplex, POP5, RPP14, RPP40 and homodimeric RPP30 form the 'palm' subcomplex, and RPP21, POP4 and RPP38 form the 'wrist' subcomplex. All subunits of the RNase P complex interact with the catalytic RNA. Several subunits of RNase P are also part of the RNase MRP complex. RNase MRP consists of a catalytic RNA moiety and about 8 protein subunits; POP1, POP7, RPP25, RPP30, RPP38, RPP40 and possibly also POP4 and POP5.

It is found in the nucleus. The protein resides in the nucleolus. Functionally, component of ribonuclease P, a ribonucleoprotein complex that generates mature tRNA molecules by cleaving their 5'-ends. Also a component of the MRP ribonuclease complex, which cleaves pre-rRNA sequences. The polypeptide is Ribonuclease P protein subunit p38 (RPP38) (Bos taurus (Bovine)).